A 419-amino-acid polypeptide reads, in one-letter code: UDP-N-acetylglucosamine 1-carboxyvinyltransferase (419 aa).

22–23 (KN) provides a ligand contact to phosphoenolpyruvate. Arg95 is a UDP-N-acetyl-alpha-D-glucosamine binding site. Cys119 (proton donor) is an active-site residue. Cys119 is modified (2-(S-cysteinyl)pyruvic acid O-phosphothioketal). UDP-N-acetyl-alpha-D-glucosamine contacts are provided by residues 164-167 (KVSV), Asp308, and Ile330.

It belongs to the EPSP synthase family. MurA subfamily.

The protein localises to the cytoplasm. The enzyme catalyses phosphoenolpyruvate + UDP-N-acetyl-alpha-D-glucosamine = UDP-N-acetyl-3-O-(1-carboxyvinyl)-alpha-D-glucosamine + phosphate. It functions in the pathway cell wall biogenesis; peptidoglycan biosynthesis. In terms of biological role, cell wall formation. Adds enolpyruvyl to UDP-N-acetylglucosamine. This is UDP-N-acetylglucosamine 1-carboxyvinyltransferase from Rickettsia rickettsii (strain Iowa).